The primary structure comprises 349 residues: GMP reductase (349 aa).

An NADP(+)-binding site is contributed by 108–131 (IDFLKIKKIFLLSSELKYICIDVA). Residues glycine 181 and glycine 183 each contribute to the K(+) site. Cysteine 186 (thioimidate intermediate) is an active-site residue. Position 216-239 (216-239 (IISDGGCTVSGDIAKAFGGGADFV)) interacts with NADP(+).

Belongs to the IMPDH/GMPR family. GuaC type 1 subfamily. As to quaternary structure, homotetramer.

The enzyme catalyses IMP + NH4(+) + NADP(+) = GMP + NADPH + 2 H(+). In terms of biological role, catalyzes the irreversible NADPH-dependent deamination of GMP to IMP. It functions in the conversion of nucleobase, nucleoside and nucleotide derivatives of G to A nucleotides, and in maintaining the intracellular balance of A and G nucleotides. In Buchnera aphidicola subsp. Acyrthosiphon pisum (strain Tuc7), this protein is GMP reductase.